A 156-amino-acid polypeptide reads, in one-letter code: Cell division protein SepF (156 aa).

Basic and acidic residues predominate over residues 23 to 36 (SYEKEQTDMKKQQD). The segment at 23 to 49 (SYEKEQTDMKKQQDPPEQQDVTFPKAQ) is disordered.

The protein belongs to the SepF family. In terms of assembly, homodimer. Interacts with FtsZ.

Its subcellular location is the cytoplasm. Functionally, cell division protein that is part of the divisome complex and is recruited early to the Z-ring. Probably stimulates Z-ring formation, perhaps through the cross-linking of FtsZ protofilaments. Its function overlaps with FtsA. This Bacillus anthracis (strain CDC 684 / NRRL 3495) protein is Cell division protein SepF.